Reading from the N-terminus, the 610-residue chain is Dopamine beta-hydroxylase (610 aa).

Residues 1 to 9 (MQVPSPSVR) are Cytoplasmic-facing. The helical; Signal-anchor for type II membrane protein transmembrane segment at 10–30 (EAASMYGTAVAVFLVILVAAL) threads the bilayer. The Intragranular portion of the chain corresponds to 31 to 610 (QGSAPAESPF…TVLNISGGKG (580 aa)). One can recognise a DOMON domain in the interval 50–166 (GTLELSWNIS…GTVHLVYGFL (117 aa)). 6 disulfides stabilise this stretch: cysteine 147–cysteine 589, cysteine 225–cysteine 276, cysteine 262–cysteine 288, cysteine 383–cysteine 496, cysteine 387–cysteine 558, and cysteine 459–cysteine 481. The N-linked (GlcNAc...) asparagine glycan is linked to asparagine 177. Residue tyrosine 223 is part of the active site. Residues histidine 255 and histidine 256 each coordinate Cu(2+). 4 residues coordinate Cu(2+): histidine 326, histidine 405, histidine 407, and methionine 480. Histidine 405 is an active-site residue. Asparagine 559 carries N-linked (GlcNAc...) asparagine glycosylation. The segment at 585 to 610 (PTPHCPASQAQSPAGPTVLNISGGKG) is disordered.

The protein belongs to the copper type II ascorbate-dependent monooxygenase family. In terms of assembly, homotetramer; composed of two disulfide-linked dimers. Requires Cu(2+) as cofactor. Post-translationally, proteolytic cleavage after the membrane-anchor leads to the release of the soluble form. N-glycosylated. Detected in chromaffin granules in the adrenal medulla (at protein level). Detected in adrenal medulla.

Its subcellular location is the cytoplasmic vesicle. It localises to the secretory vesicle lumen. The protein localises to the secretory vesicle. It is found in the chromaffin granule lumen. The protein resides in the secretory vesicle membrane. Its subcellular location is the chromaffin granule membrane. It catalyses the reaction dopamine + 2 L-ascorbate + O2 = (R)-noradrenaline + 2 monodehydro-L-ascorbate radical + H2O. The protein operates within catecholamine biosynthesis; (R)-noradrenaline biosynthesis; (R)-noradrenaline from dopamine: step 1/1. Catalyzes the hydroxylation of dopamine to noradrenaline (also known as norepinephrine), and is thus vital for regulation of these neurotransmitters. The polypeptide is Dopamine beta-hydroxylase (DBH) (Bos taurus (Bovine)).